The primary structure comprises 491 residues: Glutamyl-tRNA(Gln) amidotransferase subunit A (491 aa).

Catalysis depends on charge relay system residues K79 and S154. S178 functions as the Acyl-ester intermediate in the catalytic mechanism.

This sequence belongs to the amidase family. GatA subfamily. As to quaternary structure, heterotrimer of A, B and C subunits.

The catalysed reaction is L-glutamyl-tRNA(Gln) + L-glutamine + ATP + H2O = L-glutaminyl-tRNA(Gln) + L-glutamate + ADP + phosphate + H(+). Allows the formation of correctly charged Gln-tRNA(Gln) through the transamidation of misacylated Glu-tRNA(Gln) in organisms which lack glutaminyl-tRNA synthetase. The reaction takes place in the presence of glutamine and ATP through an activated gamma-phospho-Glu-tRNA(Gln). This chain is Glutamyl-tRNA(Gln) amidotransferase subunit A, found in Alkaliphilus metalliredigens (strain QYMF).